Here is an 852-residue protein sequence, read N- to C-terminus: Eukaryotic translation initiation factor 3 subunit C (852 aa).

The tract at residues 1-90 is disordered; that stretch reads MSRFFVSGYP…DSDSDDEGRK (90 aa). Positions 14–57 are enriched in acidic residues; it reads SSEEEDLLSSSEEELLSSESEEDNFSSDSEFGNDSDNDSSDSDS. The PCI domain maps to 597–772; the sequence is FHMHINLELL…SFVNFTTNDH (176 aa). A compositionally biased stretch (polar residues) spans 798 to 809; sequence TASNGYSRKQPM. The interval 798-852 is disordered; sequence TASNGYSRKQPMQQQQQQQQQQQQQKEQKELLHEENNRFRYANVNANNDEFQTTA. Positions 810–822 are enriched in low complexity; the sequence is QQQQQQQQQQQQQ. Basic and acidic residues predominate over residues 823-835; it reads KEQKELLHEENNR. The span at 841–852 shows a compositional bias: polar residues; it reads VNANNDEFQTTA.

This sequence belongs to the eIF-3 subunit C family. As to quaternary structure, component of the eukaryotic translation initiation factor 3 (eIF-3) complex.

It is found in the cytoplasm. Functionally, component of the eukaryotic translation initiation factor 3 (eIF-3) complex, which is involved in protein synthesis of a specialized repertoire of mRNAs and, together with other initiation factors, stimulates binding of mRNA and methionyl-tRNAi to the 40S ribosome. The eIF-3 complex specifically targets and initiates translation of a subset of mRNAs involved in cell proliferation. This is Eukaryotic translation initiation factor 3 subunit C from Debaryomyces hansenii (strain ATCC 36239 / CBS 767 / BCRC 21394 / JCM 1990 / NBRC 0083 / IGC 2968) (Yeast).